The primary structure comprises 617 residues: UvrABC system protein C (617 aa).

Residues 22–100 enclose the GIY-YIG domain; that stretch reads NLPGVYRFFN…IKALSPKYNI (79 aa). Residues 209–244 enclose the UVR domain; it reads DELTRTLQHKMQTAAANLQFEEAARYRDQIQALGIM.

It belongs to the UvrC family. As to quaternary structure, interacts with UvrB in an incision complex.

It is found in the cytoplasm. In terms of biological role, the UvrABC repair system catalyzes the recognition and processing of DNA lesions. UvrC both incises the 5' and 3' sides of the lesion. The N-terminal half is responsible for the 3' incision and the C-terminal half is responsible for the 5' incision. The protein is UvrABC system protein C of Neisseria meningitidis serogroup B (strain ATCC BAA-335 / MC58).